The following is a 1122-amino-acid chain: Midnolin homolog (1122 aa).

Positions 69-143 (INLNISTTTG…IILIPNVETG (75 aa)) constitute a Ubiquitin-like domain. A required for interaction with Pc region spans residues 210-300 (GGASGSSINA…SGQRSSGRIG (91 aa)). Disordered stretches follow at residues 257–399 (VGGS…STLN), 596–630 (KHRH…HFFN), 645–677 (FATS…GAGA), 746–775 (GVVS…KSGS), 840–876 (APTT…RSKM), 886–905 (KCNS…ASGS), 922–955 (AATK…NGCT), and 1067–1122 (AAPA…DTAA). Residues 266–298 (SGTSSSSSSTSSSSSSSSSSSRTRSSGQRSSGR) are compositionally biased toward low complexity. Basic residues-rich tracts occupy residues 300–310 (GHGHVHSHQHP) and 321–352 (SHGH…HHHN). Low complexity predominate over residues 375-397 (PSSSGASGSAPATGTGQSQSSST). Basic residues predominate over residues 596 to 610 (KHRHYHGQGHGHGHG). Composition is skewed to low complexity over residues 612-627 (GHSS…SSSH), 648-663 (SSSS…SSSP), 746-766 (GVVS…AASG), 856-867 (SGSSSTTSSGSG), 889-903 (SRAQ…TLAS), and 922-936 (AATK…SSHS). Polar residues-rich tracts occupy residues 937–954 (CCQT…SNGC) and 1071–1085 (NSIT…VNGN). Positions 1086-1107 (TSTAPATAATSAAAAPTAAPPS) are enriched in low complexity.

As to quaternary structure, interacts with PRC1 complex member polycomb protein Pc; the interaction targets Pc for ubiquitin-independent proteasomal degradation. Does not interact with PRC1 members Ph, Psc or Sce so does not appear to be a member of the PRC1 complex. Interacts with 26S proteasome regulatory subunit Rpn10.

It is found in the nucleus. Facilitates ubiquitin-independent proteasomal degradation of polycomb protein Pc by interacting directly with the proteasome and recruiting Pc to it. This chain is Midnolin homolog, found in Drosophila melanogaster (Fruit fly).